Consider the following 359-residue polypeptide: Nicotinate-nucleotide--dimethylbenzimidazole phosphoribosyltransferase (359 aa).

E318 functions as the Proton acceptor in the catalytic mechanism.

It belongs to the CobT family. Homodimer.

It catalyses the reaction 5,6-dimethylbenzimidazole + nicotinate beta-D-ribonucleotide = alpha-ribazole 5'-phosphate + nicotinate + H(+). It functions in the pathway nucleoside biosynthesis; alpha-ribazole biosynthesis; alpha-ribazole from 5,6-dimethylbenzimidazole: step 1/2. Catalyzes the synthesis of alpha-ribazole-5'-phosphate from nicotinate mononucleotide (NAMN) and 5,6-dimethylbenzimidazole (DMB). The chain is Nicotinate-nucleotide--dimethylbenzimidazole phosphoribosyltransferase from Shigella flexneri serotype 5b (strain 8401).